A 223-amino-acid polypeptide reads, in one-letter code: Protein-L-isoaspartate O-methyltransferase (223 aa).

Residue Ser70 is part of the active site.

This sequence belongs to the methyltransferase superfamily. L-isoaspartyl/D-aspartyl protein methyltransferase family.

The protein localises to the cytoplasm. It catalyses the reaction [protein]-L-isoaspartate + S-adenosyl-L-methionine = [protein]-L-isoaspartate alpha-methyl ester + S-adenosyl-L-homocysteine. Catalyzes the methyl esterification of L-isoaspartyl residues in peptides and proteins that result from spontaneous decomposition of normal L-aspartyl and L-asparaginyl residues. It plays a role in the repair and/or degradation of damaged proteins. The polypeptide is Protein-L-isoaspartate O-methyltransferase (Saccharophagus degradans (strain 2-40 / ATCC 43961 / DSM 17024)).